Here is a 299-residue protein sequence, read N- to C-terminus: Tricarboxylate transport protein (299 aa).

Solcar repeat units lie at residues 10 to 97, 109 to 199, and 212 to 297; these read VDPL…IKDM, TRGV…IKTL, and LSSG…VLVM. The next 6 membrane-spanning stretches (helical) occupy residues 16–36, 66–86, 113–133, 174–193, 215–235, and 272–291; these read FLAG…FEFA, IGSI…KAGI, IAGL…FEAI, GVLP…LGCY, GLTF…TMPL, and GATP…FTIY.

This sequence belongs to the mitochondrial carrier (TC 2.A.29) family.

The protein localises to the mitochondrion inner membrane. Functionally, transport of citrate across inner mitochondrial membrane. In Saccharomyces cerevisiae (strain ATCC 204508 / S288c) (Baker's yeast), this protein is Tricarboxylate transport protein (CTP1).